The primary structure comprises 501 residues: MDQQEAPIYYGRSVNKVYNQEFIIDSRFKIVKELGHGAYGIVCSAKYDNGSKKVPDSNNGNASSSANASFVAIKKITNIFSKNILCKRALRELKLLQFFRGHKNITCLYDLDIIPNPMTGEFNEIYLYEELMECDMHQIIRSGQPLSDQHYQSFIYQVLCGLNFIHSADVLHRDLKPGNLLVNADCELKICDFGLARGFSENPDENAGFMTEYVATRWYRAPEIMLSFTNYTKAIDIWSVGCILAELLGGKPLFRGKDYVDQLNQILMILGTPPESTLQRIGSHRAQNYVRSLPITRKASYEELFPDANPLALDLLERMLTLDPRERITVRDALNHKYLELWHDPKEEIECQVKFDFKSFETVDGLDEMKQLIMDEVQKFREFVRKPIEEQQRIQMQLHMQKREEQRQEEEEKELLEQQRQFPAQESMDISQTPYNNLETNIGTPQVEDDYPRPQELDEFTFSNLESSSSMNLFQDMAKPSGEEYIKLEEELGFGLDWCYV.

The 312-residue stretch at 28–339 (FKIVKELGHG…VRDALNHKYL (312 aa)) folds into the Protein kinase domain. Residues 34–42 (LGHGAYGIV) and K74 each bind ATP. The Proton acceptor role is filled by D174. The residue at position 211 (T211) is a Phosphothreonine. Positions 211-213 (TEY) match the TXY motif. Position 213 is a phosphotyrosine (Y213). The disordered stretch occupies residues 400–450 (MQKREEQRQEEEEKELLEQQRQFPAQESMDISQTPYNNLETNIGTPQVEDD). Residues 422–444 (FPAQESMDISQTPYNNLETNIGT) are compositionally biased toward polar residues.

Belongs to the protein kinase superfamily. CMGC Ser/Thr protein kinase family. MAP kinase subfamily. Mg(2+) serves as cofactor. Dually phosphorylated on Thr-211 and Tyr-213, which activates the enzyme.

The catalysed reaction is L-seryl-[protein] + ATP = O-phospho-L-seryl-[protein] + ADP + H(+). It carries out the reaction L-threonyl-[protein] + ATP = O-phospho-L-threonyl-[protein] + ADP + H(+). Its activity is regulated as follows. Activated by tyrosine and threonine phosphorylation. The sequence is that of Mitogen-activated protein kinase MKC1 (MKC1) from Candida albicans (Yeast).